The chain runs to 293 residues: Ribosomal protein L11 methyltransferase (293 aa).

S-adenosyl-L-methionine-binding residues include threonine 145, glycine 166, aspartate 188, and asparagine 230.

It belongs to the methyltransferase superfamily. PrmA family.

The protein localises to the cytoplasm. It catalyses the reaction L-lysyl-[protein] + 3 S-adenosyl-L-methionine = N(6),N(6),N(6)-trimethyl-L-lysyl-[protein] + 3 S-adenosyl-L-homocysteine + 3 H(+). Its function is as follows. Methylates ribosomal protein L11. In Salmonella agona (strain SL483), this protein is Ribosomal protein L11 methyltransferase.